Reading from the N-terminus, the 309-residue chain is Biotin synthase (309 aa).

One can recognise a Radical SAM core domain in the interval 35-259 (NKIQISSLLS…MIPKSYIRLS (225 aa)). Positions 50, 54, and 57 each coordinate [4Fe-4S] cluster. C94, C125, C185, and R257 together coordinate [2Fe-2S] cluster.

Belongs to the radical SAM superfamily. Biotin synthase family. Homodimer. The cofactor is [4Fe-4S] cluster. [2Fe-2S] cluster serves as cofactor.

The catalysed reaction is (4R,5S)-dethiobiotin + (sulfur carrier)-SH + 2 reduced [2Fe-2S]-[ferredoxin] + 2 S-adenosyl-L-methionine = (sulfur carrier)-H + biotin + 2 5'-deoxyadenosine + 2 L-methionine + 2 oxidized [2Fe-2S]-[ferredoxin]. The protein operates within cofactor biosynthesis; biotin biosynthesis; biotin from 7,8-diaminononanoate: step 2/2. Catalyzes the conversion of dethiobiotin (DTB) to biotin by the insertion of a sulfur atom into dethiobiotin via a radical-based mechanism. In Rickettsia felis (strain ATCC VR-1525 / URRWXCal2) (Rickettsia azadi), this protein is Biotin synthase.